A 431-amino-acid polypeptide reads, in one-letter code: Cyclic GMP-AMP synthase-like receptor (431 aa).

ATP is bound by residues serine 73 and 85–87 (EFD). Positions 85, 87, and 212 each coordinate Mg(2+). GTP is bound at residue aspartate 212. ATP is bound by residues lysine 290 and 304-308 (SYALK). Mn(2+) is bound at residue glutamate 316.

Belongs to the mab-21 family. It depends on Mg(2+) as a cofactor. The cofactor is Mn(2+).

It catalyses the reaction GTP + ATP = 2',3'-cGAMP + 2 diphosphate. The catalysed reaction is GTP + ATP = pppGp(2'-5')A + diphosphate. It carries out the reaction pppGp(2'-5')A = 2',3'-cGAMP + diphosphate. Functionally, nucleotidyltransferase that catalyzes the formation of cyclic GMP-AMP (2',3'-cGAMP) from ATP and GTP and plays a key role in innate immunity. Acts as a key sensor of double-stranded RNA (dsRNA), the presence of dsRNA in the cytoplasm being a danger signal that triggers the immune responses. Directly binds dsRNA, activating the nucleotidyltransferase activity, leading to synthesis of 2',3'-cGAMP, a second messenger that binds to and activates Sting, thereby triggering the immune response via activation of the NF-kappa-B transcription factor. In Frankliniella occidentalis (Western flower thrips), this protein is Cyclic GMP-AMP synthase-like receptor.